Consider the following 215-residue polypeptide: Protein-L-isoaspartate O-methyltransferase (215 aa).

Ser-62 is a catalytic residue.

This sequence belongs to the methyltransferase superfamily. L-isoaspartyl/D-aspartyl protein methyltransferase family.

It is found in the cytoplasm. The catalysed reaction is [protein]-L-isoaspartate + S-adenosyl-L-methionine = [protein]-L-isoaspartate alpha-methyl ester + S-adenosyl-L-homocysteine. Catalyzes the methyl esterification of L-isoaspartyl residues in peptides and proteins that result from spontaneous decomposition of normal L-aspartyl and L-asparaginyl residues. It plays a role in the repair and/or degradation of damaged proteins. The sequence is that of Protein-L-isoaspartate O-methyltransferase from Bradyrhizobium sp. (strain ORS 278).